Here is a 221-residue protein sequence, read N- to C-terminus: Ribose-5-phosphate isomerase A (221 aa).

Substrate-binding positions include 26 to 29, 81 to 84, and 94 to 97; these read TGST, DGAD, and KGGG. The Proton acceptor role is filled by E103. A substrate-binding site is contributed by K121.

This sequence belongs to the ribose 5-phosphate isomerase family. As to quaternary structure, homodimer.

The catalysed reaction is aldehydo-D-ribose 5-phosphate = D-ribulose 5-phosphate. It participates in carbohydrate degradation; pentose phosphate pathway; D-ribose 5-phosphate from D-ribulose 5-phosphate (non-oxidative stage): step 1/1. Catalyzes the reversible conversion of ribose-5-phosphate to ribulose 5-phosphate. The chain is Ribose-5-phosphate isomerase A from Bacillus mycoides (strain KBAB4) (Bacillus weihenstephanensis).